We begin with the raw amino-acid sequence, 147 residues long: Antiholin-like protein LrgA (147 aa).

The next 4 helical transmembrane spans lie at proline 12–isoleucine 32, phenylalanine 35–cysteine 55, asparagine 74–serine 94, and phenylalanine 98–valine 118.

This sequence belongs to the CidA/LrgA family. LrgA subfamily.

It is found in the cell membrane. Inhibits the expression or activity of extracellular murein hydrolases by interacting, possibly with LrgB, with the holin-like proteins CidA and/or CidB. The LrgAB and CidAB proteins may affect the proton motive force of the membrane. May be involved in programmed cell death (PCD), possibly triggering PCD in response to antibiotics and environmental stresses. The polypeptide is Antiholin-like protein LrgA (Staphylococcus aureus (strain USA300)).